We begin with the raw amino-acid sequence, 65 residues long: Large ribosomal subunit protein bL33c (65 aa).

It belongs to the bacterial ribosomal protein bL33 family.

It is found in the plastid. The protein localises to the chloroplast. This Chara vulgaris (Common stonewort) protein is Large ribosomal subunit protein bL33c.